A 542-amino-acid chain; its full sequence is Membrane protein insertase YidC (542 aa).

Residues 6 to 26 form a helical membrane-spanning segment; that stretch reads NILLIGLLFVSFLLWQQWQAD. A compositionally biased stretch (polar residues) spans 32–41; that stretch reads VAQTQSSVAP. Residues 32-57 form a disordered region; the sequence is VAQTQSSVAPSTVADAHSSDVPDADS. Transmembrane regions (helical) follow at residues 326–346, 350–370, 421–441, 458–478, and 501–521; these read LVVD…LLMF, FVGN…GMLY, GGCL…WVLL, LSVQ…MFIM, and VIFT…WLVG.

Belongs to the OXA1/ALB3/YidC family. Type 1 subfamily. In terms of assembly, interacts with the Sec translocase complex via SecD. Specifically interacts with transmembrane segments of nascent integral membrane proteins during membrane integration.

It localises to the cell inner membrane. In terms of biological role, required for the insertion and/or proper folding and/or complex formation of integral membrane proteins into the membrane. Involved in integration of membrane proteins that insert both dependently and independently of the Sec translocase complex, as well as at least some lipoproteins. Aids folding of multispanning membrane proteins. The sequence is that of Membrane protein insertase YidC from Shewanella piezotolerans (strain WP3 / JCM 13877).